Here is a 284-residue protein sequence, read N- to C-terminus: Type II methyltransferase M1.LlaDCHI (284 aa).

Residues W17, K21, D62, and D194 each contribute to the S-adenosyl-L-methionine site.

The protein belongs to the N(4)/N(6)-methyltransferase family.

The enzyme catalyses a 2'-deoxyadenosine in DNA + S-adenosyl-L-methionine = an N(6)-methyl-2'-deoxyadenosine in DNA + S-adenosyl-L-homocysteine + H(+). An alpha subtype methylase, recognizes the double-stranded sequence 5'-GATC-3', methylates A-2 on both strands, and protects the DNA from cleavage by the LlaDCHI endonuclease. This Lactococcus lactis subsp. cremoris (Streptococcus cremoris) protein is Type II methyltransferase M1.LlaDCHI.